A 422-amino-acid chain; its full sequence is Dihydrofolate synthase/folylpolyglutamate synthase (422 aa).

29 to 31 is a 7,8-dihydropteroate binding site; that stretch reads DLG. 59–62 provides a ligand contact to ATP; the sequence is GKGT. A Mg(2+)-binding site is contributed by Ser-83. 122 to 125 provides a ligand contact to 7,8-dihydropteroate; the sequence is TYFE. Residue Glu-146 coordinates Mg(2+). 153–155 serves as a coordination point for 7,8-dihydropteroate; sequence LDA. His-173 is a Mg(2+) binding site. Position 188 is an N6-carboxylysine (Lys-188). ATP contacts are provided by Asn-257, Arg-289, and Asp-302.

It belongs to the folylpolyglutamate synthase family. In terms of assembly, monomer. Mg(2+) is required as a cofactor.

It catalyses the reaction 7,8-dihydropteroate + L-glutamate + ATP = 7,8-dihydrofolate + ADP + phosphate + H(+). The catalysed reaction is (6S)-5,6,7,8-tetrahydrofolyl-(gamma-L-Glu)(n) + L-glutamate + ATP = (6S)-5,6,7,8-tetrahydrofolyl-(gamma-L-Glu)(n+1) + ADP + phosphate + H(+). The enzyme catalyses 10-formyltetrahydrofolyl-(gamma-L-Glu)(n) + L-glutamate + ATP = 10-formyltetrahydrofolyl-(gamma-L-Glu)(n+1) + ADP + phosphate + H(+). It carries out the reaction (6R)-5,10-methylenetetrahydrofolyl-(gamma-L-Glu)(n) + L-glutamate + ATP = (6R)-5,10-methylenetetrahydrofolyl-(gamma-L-Glu)(n+1) + ADP + phosphate + H(+). It functions in the pathway cofactor biosynthesis; tetrahydrofolate biosynthesis; 7,8-dihydrofolate from 2-amino-4-hydroxy-6-hydroxymethyl-7,8-dihydropteridine diphosphate and 4-aminobenzoate: step 2/2. The protein operates within cofactor biosynthesis; tetrahydrofolylpolyglutamate biosynthesis. Functions in two distinct reactions of the de novo folate biosynthetic pathway. Catalyzes the addition of a glutamate residue to dihydropteroate (7,8-dihydropteroate or H2Pte) to form dihydrofolate (7,8-dihydrofolate monoglutamate or H2Pte-Glu). Also catalyzes successive additions of L-glutamate to tetrahydrofolate or 10-formyltetrahydrofolate or 5,10-methylenetetrahydrofolate, leading to folylpolyglutamate derivatives. The protein is Dihydrofolate synthase/folylpolyglutamate synthase of Escherichia coli (strain K12).